A 301-amino-acid polypeptide reads, in one-letter code: Homoserine O-acetyltransferase (301 aa).

The active-site Acyl-thioester intermediate is the Cys-142. Residues Lys-163 and Ser-192 each contribute to the substrate site. His-235 acts as the Proton acceptor in catalysis. Residue Glu-237 is part of the active site. Position 249 (Arg-249) interacts with substrate.

It belongs to the MetA family.

It is found in the cytoplasm. The enzyme catalyses L-homoserine + acetyl-CoA = O-acetyl-L-homoserine + CoA. Its pathway is amino-acid biosynthesis; L-methionine biosynthesis via de novo pathway; O-acetyl-L-homoserine from L-homoserine: step 1/1. In terms of biological role, transfers an acetyl group from acetyl-CoA to L-homoserine, forming acetyl-L-homoserine. This chain is Homoserine O-acetyltransferase, found in Clostridium acetobutylicum (strain ATCC 824 / DSM 792 / JCM 1419 / IAM 19013 / LMG 5710 / NBRC 13948 / NRRL B-527 / VKM B-1787 / 2291 / W).